The following is a 295-amino-acid chain: Transcription factor bHLH19 (295 aa).

The bHLH domain maps to 115–164 (VLAKEHVLAERKRREKLSEKFIALSALLPGLKKADKVTILDDAISRMKQL).

As to quaternary structure, homodimer. Expressed in roots and leaves.

The protein resides in the nucleus. In Arabidopsis thaliana (Mouse-ear cress), this protein is Transcription factor bHLH19 (BHLH19).